Reading from the N-terminus, the 433-residue chain is GTPase Obg (433 aa).

The Obg domain occupies methionine 1–leucine 159. Positions alanine 160–asparagine 329 constitute an OBG-type G domain. Residues glycine 166 to serine 173, phenylalanine 191 to isoleucine 195, aspartate 212 to glycine 215, asparagine 282 to aspartate 285, and isoleucine 310 to alanine 312 each bind GTP. Mg(2+) is bound by residues serine 173 and threonine 193. Positions threonine 355 to aspartate 433 constitute an OCT domain.

This sequence belongs to the TRAFAC class OBG-HflX-like GTPase superfamily. OBG GTPase family. As to quaternary structure, monomer. It depends on Mg(2+) as a cofactor.

Its subcellular location is the cytoplasm. In terms of biological role, an essential GTPase which binds GTP, GDP and possibly (p)ppGpp with moderate affinity, with high nucleotide exchange rates and a fairly low GTP hydrolysis rate. Plays a role in control of the cell cycle, stress response, ribosome biogenesis and in those bacteria that undergo differentiation, in morphogenesis control. This Mycoplasma genitalium (strain ATCC 33530 / DSM 19775 / NCTC 10195 / G37) (Mycoplasmoides genitalium) protein is GTPase Obg.